The following is a 448-amino-acid chain: O-Mevalon transferase yanI (448 aa).

A glycan (N-linked (GlcNAc...) asparagine) is linked at Asn-2. Transmembrane regions (helical) follow at residues 21–41 (VLLSHSLASTHYTVLAFLLAV), 54–74 (YGLLLLQITCALQAFVAPPPP), 79–96 (AVLYTSGVLMANLLARYF), 165–185 (FVTAQLLTIIAMYAGLYLVEV), 217–237 (LIVLGLALVVYSHFALFVLPL), 316–336 (MLMLITFVISGLIHTSGSYHV), 350–370 (VKYFISQAISIMIEDFGCWLL), and 390–410 (IVTAGWYFWSRVHWSVMPVAL).

It belongs to the wax synthase family.

It localises to the membrane. The protein operates within secondary metabolite biosynthesis; terpenoid biosynthesis. O-Mevalon transferase yanI; part of the gene cluster that mediates the biosynthesis of yanuthone D, a fungal isoprenoid epoxycyclohexenone that acts as an antibiotic against fungi and bacteria. The first step of the pathway is the synthesis of 6-methylsalicylic acid (6-MSA) by the polyketide synthase yanA. 6-MSA is then converted to m-cresol by the decarboxylase yanB. The cytochrome P450 monooxygenase yanC then catalyzes the oxidation of m-cresol to toluquinol. Epoxidation of toluquinol is then performed by the short chain dehydrogenase yanD, with the help of yanE, and a further prenylation by yanG leads to 7-deacetoxyyanuthone A. The next step is the hydroxylation of C-22 of 7-deacetoxyyanuthone A by the cytochrome P450 monooxygenase yanH to yield 22-deacetylyanuthone A. O-Mevalon transferase yanI then attaches mevalon to the hydroxyl group of 22-deacetylyanuthone A to produce yanuthone E. Finally, the FAD-dependent monooxygenase yanF oxidizes the hydroxyl group at C15 of yanuthone E to form yanuthone D. Furthermore, several branching points in the pathway lead to the production of yanuthones F and G from 7-deacetoxyyanuthone A; yanuthones H and I from 22-deacetylyanuthone A; and yanuthone J from yanuthone E. The protein is O-Mevalon transferase yanI of Aspergillus niger (strain ATCC 1015 / CBS 113.46 / FGSC A1144 / LSHB Ac4 / NCTC 3858a / NRRL 328 / USDA 3528.7).